The primary structure comprises 451 residues: Zinc finger MYND domain-containing protein 10 homolog (451 aa).

Positions 412, 415, 423, 426, 432, 436, 444, and 448 each coordinate Zn(2+). The segment at 412–448 (CATCQAKAKKKCACCKKVHYCSRDCQLKDWPQHKLVC) adopts an MYND-type zinc-finger fold.

The protein belongs to the ZMYND10 family. In terms of tissue distribution, specifically expressed in cells with flagella and motile cilia: chordotonal sensory neurons and sperm.

Its subcellular location is the cytoplasm. The protein localises to the cell projection. It is found in the cilium. The protein resides in the dynein axonemal particle. In terms of biological role, plays a role in axonemal structure organization and motility. May be involved in axonemal pre-assembly of inner and outer dynein arms (IDA and ODA, respectively) for proper axoneme building for cilia motility. The sequence is that of Zinc finger MYND domain-containing protein 10 homolog from Drosophila melanogaster (Fruit fly).